Here is a 144-residue protein sequence, read N- to C-terminus: Maximins 1/H12 (144 aa).

The N-terminal stretch at M1–A18 is a signal peptide. Residues R19–R43 constitute a propeptide that is removed on maturation. N70 carries the post-translational modification Asparagine amide. A propeptide spanning residues T74 to R123 is cleaved from the precursor. Residue I143 is modified to Isoleucine amide.

Belongs to the bombinin family. Expressed by the skin glands.

The protein resides in the secreted. In terms of biological role, maximin-1 shows antibacterial activity against both Gram-positive and Gram-negative bacteria. It also shows antimicrobial activity against the fungus C.albicans, but not against A.flavus nor P.uticale. It has little hemolytic activity. It possess a significant cytotoxicity against tumor cell lines. It does not possess a significant anti-HIV activity. It shows high spermicidal activity. Maximin-H12 shows antimicrobial activity against bacteria and against the fungus C.albicans. Shows strong hemolytic activity. In Bombina maxima (Giant fire-bellied toad), this protein is Maximins 1/H12.